Here is a 245-residue protein sequence, read N- to C-terminus: NAD-dependent protein deacetylase (245 aa).

The Deacetylase sirtuin-type domain occupies 1 to 245 (MIFVQQFEEV…EFVEGLSSIK (245 aa)). NAD(+) contacts are provided by A26, T30, F37, R38, Q105, I107, D108, and H123. F37 is a nicotinamide binding site. Positions 107 and 108 each coordinate nicotinamide. The active-site Proton acceptor is the H123. Residues C131, C134, C151, and C154 each coordinate Zn(2+). Positions 190, 191, 216, and 234 each coordinate NAD(+).

Belongs to the sirtuin family. Class U subfamily. Zn(2+) serves as cofactor.

The protein resides in the cytoplasm. It catalyses the reaction N(6)-acetyl-L-lysyl-[protein] + NAD(+) + H2O = 2''-O-acetyl-ADP-D-ribose + nicotinamide + L-lysyl-[protein]. Its function is as follows. NAD-dependent protein deacetylase which modulates the activities of several enzymes which are inactive in their acetylated form. This chain is NAD-dependent protein deacetylase, found in Bacillus thuringiensis subsp. konkukian (strain 97-27).